The following is a 263-amino-acid chain: Nucleoside triphosphate pyrophosphohydrolase (263 aa).

ATP is bound by residues 168-172 (KVYEE), glutamate 175, and 189-192 (KLEE). Mg(2+) is bound by residues glutamate 172 and glutamate 175. 2 residues coordinate Mg(2+): glutamate 193 and aspartate 196. ATP-binding positions include aspartate 196, 222–226 (KFERR), and tryptophan 253.

Belongs to the nucleoside triphosphate pyrophosphohydrolase family. Homodimer. Mg(2+) is required as a cofactor.

It carries out the reaction ATP + H2O = AMP + diphosphate + H(+). Functionally, involved in the regulation of bacterial cell survival under conditions of nutritional stress. Regulates the MazE-MazF toxin-antitoxin (TA) system that mediates programmed cell death (PCD). This is achieved by lowering the cellular concentration of (p)ppGpp produced by RelA under amino acid starvation, thus protecting the cell from the toxicity of MazF. Reduction of (p)ppGpp can be achieved by direct degradation of (p)ppGpp or by degradation of NTPs, which are substrates for (p)ppGpp synthesis by RelA. The polypeptide is Nucleoside triphosphate pyrophosphohydrolase (mazG) (Escherichia coli O157:H7).